A 1036-amino-acid polypeptide reads, in one-letter code: Isoleucine--tRNA ligase (1036 aa).

Positions 46–56 match the 'HIGH' region motif; sequence PFATGLPHYGH. The short motif at 589–593 is the 'KMSKS' region element; it reads KMSKR. K592 contacts ATP.

The protein belongs to the class-I aminoacyl-tRNA synthetase family. IleS type 2 subfamily. Monomer. Zn(2+) is required as a cofactor.

The protein resides in the cytoplasm. It catalyses the reaction tRNA(Ile) + L-isoleucine + ATP = L-isoleucyl-tRNA(Ile) + AMP + diphosphate. Functionally, catalyzes the attachment of isoleucine to tRNA(Ile). As IleRS can inadvertently accommodate and process structurally similar amino acids such as valine, to avoid such errors it has two additional distinct tRNA(Ile)-dependent editing activities. One activity is designated as 'pretransfer' editing and involves the hydrolysis of activated Val-AMP. The other activity is designated 'posttransfer' editing and involves deacylation of mischarged Val-tRNA(Ile). The chain is Isoleucine--tRNA ligase from Chlamydia muridarum (strain MoPn / Nigg).